Here is a 362-residue protein sequence, read N- to C-terminus: Adenosine deaminase (362 aa).

Zn(2+) contacts are provided by histidine 19 and histidine 21. Residues histidine 21, aspartate 23, and glycine 181 each coordinate substrate. Histidine 208 provides a ligand contact to Zn(2+). Glutamate 211 functions as the Proton donor in the catalytic mechanism. Aspartate 300 serves as a coordination point for Zn(2+).

It belongs to the metallo-dependent hydrolases superfamily. Adenosine and AMP deaminases family. Adenosine deaminase subfamily. Zn(2+) is required as a cofactor.

It catalyses the reaction adenosine + H2O + H(+) = inosine + NH4(+). It carries out the reaction 2'-deoxyadenosine + H2O + H(+) = 2'-deoxyinosine + NH4(+). Its function is as follows. Catalyzes the hydrolytic deamination of adenosine and 2-deoxyadenosine. This chain is Adenosine deaminase, found in Mycobacterium leprae (strain TN).